We begin with the raw amino-acid sequence, 484 residues long: Probable cytochrome P450 316a1 (484 aa).

Cysteine 433 serves as a coordination point for heme.

This sequence belongs to the cytochrome P450 family. Heme serves as cofactor.

It is found in the endoplasmic reticulum membrane. The protein resides in the microsome membrane. May be involved in the metabolism of insect hormones and in the breakdown of synthetic insecticides. This chain is Probable cytochrome P450 316a1 (Cyp316a1), found in Drosophila melanogaster (Fruit fly).